Here is a 321-residue protein sequence, read N- to C-terminus: Anthranilate phosphoribosyltransferase (321 aa).

Residues Gly72, 75-76 (GD), Thr80, 82-85 (NVST), 99-107 (KHGNVSITS), and Ser111 contribute to the 5-phospho-alpha-D-ribose 1-diphosphate site. Gly72 serves as a coordination point for anthranilate. Position 84 (Ser84) interacts with Mg(2+). Anthranilate is bound at residue Asn102. Arg157 provides a ligand contact to anthranilate. Mg(2+) is bound by residues Asp216 and Glu217.

It belongs to the anthranilate phosphoribosyltransferase family. Homodimer. The cofactor is Mg(2+).

The catalysed reaction is N-(5-phospho-beta-D-ribosyl)anthranilate + diphosphate = 5-phospho-alpha-D-ribose 1-diphosphate + anthranilate. The protein operates within amino-acid biosynthesis; L-tryptophan biosynthesis; L-tryptophan from chorismate: step 2/5. Functionally, catalyzes the transfer of the phosphoribosyl group of 5-phosphorylribose-1-pyrophosphate (PRPP) to anthranilate to yield N-(5'-phosphoribosyl)-anthranilate (PRA). The protein is Anthranilate phosphoribosyltransferase of Methanococcus maripaludis (strain C7 / ATCC BAA-1331).